Here is a 356-residue protein sequence, read N- to C-terminus: tRNA N6-adenosine threonylcarbamoyltransferase (356 aa).

His115 and His119 together coordinate Fe cation. Substrate contacts are provided by residues 138–142, Asp171, Gly184, and Asn283; that span reads LVSGG. Asp311 is a Fe cation binding site.

Belongs to the KAE1 / TsaD family. Requires Fe(2+) as cofactor.

The protein localises to the cytoplasm. The enzyme catalyses L-threonylcarbamoyladenylate + adenosine(37) in tRNA = N(6)-L-threonylcarbamoyladenosine(37) in tRNA + AMP + H(+). Required for the formation of a threonylcarbamoyl group on adenosine at position 37 (t(6)A37) in tRNAs that read codons beginning with adenine. Is involved in the transfer of the threonylcarbamoyl moiety of threonylcarbamoyl-AMP (TC-AMP) to the N6 group of A37, together with TsaE and TsaB. TsaD likely plays a direct catalytic role in this reaction. The sequence is that of tRNA N6-adenosine threonylcarbamoyltransferase from Prochlorococcus marinus (strain MIT 9312).